The primary structure comprises 2923 residues: Cadherin EGF LAG seven-pass G-type receptor 2 (2923 aa).

A signal peptide spans 1–31 (MRSPATGVPLPTPPPPLLLLLLLLLPPPLLG). At 32–2380 (DQVGPCRSLG…GEILPLKTLT (2349 aa)) the chain is on the extracellular side. Positions 154 to 198 (PGLRAGERSPEESLGGRRKRNVNTAPQFQPPSYQATVPENQPAGT) are disordered. Residues 158–168 (AGERSPEESLG) show a composition bias toward basic and acidic residues. Positions 175–196 (VNTAPQFQPPSYQATVPENQPA) are enriched in polar residues. Cadherin domains are found at residues 182-289 (QPPS…DPVF), 290-399 (EQQE…APQF), 400-505 (SEKR…APIF), 506-610 (VSTP…NPTF), 611-712 (TQPE…RPVF), 713-815 (QSSH…APQF), 816-921 (LRDS…PPVF), 922-1023 (EQDE…PPVL), and 1028-1146 (ILFN…SPLL). Asn486, Asn557, and Asn701 each carry an N-linked (GlcNAc...) asparagine glycan. Residues Asn1036, Asn1076, Asn1182, and Asn1212 are each glycosylated (N-linked (GlcNAc...) asparagine). Residues 1228-1286 (DDNICLREPCENYMRCVSVLRFDSSAPFIASSSVLFRPIHPVGGLRCRCPPGFTGDYCE) enclose the EGF-like 1; calcium-binding domain. 9 disulfide bridges follow: Cys1232/Cys1243, Cys1237/Cys1274, Cys1276/Cys1285, Cys1292/Cys1303, Cys1297/Cys1312, Cys1314/Cys1323, Cys1332/Cys1343, Cys1337/Cys1353, and Cys1355/Cys1365. One can recognise an EGF-like 2; calcium-binding domain in the interval 1288–1324 (EVDLCYSRPCGPHGRCRSREGGYTCLCRDGYTGEHCE). Residues 1328–1366 (RSGRCTPGVCKNGGTCVNLLVGGFKCDCPSGDFEKPYCQ) form the EGF-like 3; calcium-binding domain. The 205-residue stretch at 1367–1571 (VTTRSFPAHS…IANNGTVPGC (205 aa)) folds into the Laminin G-like 1 domain. N-linked (GlcNAc...) asparagine glycans are attached at residues Asn1501 and Asn1565. Disulfide bonds link Cys1545–Cys1571, Cys1578–Cys1589, Cys1583–Cys1598, and Cys1600–Cys1609. One can recognise an EGF-like 4; calcium-binding domain in the interval 1574 to 1610 (KKNVCDSNTCHNGGTCVNQWDAFSCECPLGFGGKSCA). Asn1591 is modified ((3R)-3-hydroxyasparagine). The Laminin G-like 2 domain occupies 1614-1791 (ANPQHFLGSS…GESINVEQGC (178 aa)). N-linked (GlcNAc...) asparagine glycosylation is present at Asn1741. Intrachain disulfides connect Cys1761-Cys1791, Cys1797-Cys1808, Cys1802-Cys1817, Cys1819-Cys1828, Cys1832-Cys1843, Cys1837-Cys1855, Cys1857-Cys1866, Cys1887-Cys1899, Cys1889-Cys1906, Cys1908-Cys1921, Cys1924-Cys1936, Cys1926-Cys1943, Cys1945-Cys1954, and Cys1957-Cys1969. The EGF-like 5; calcium-binding domain maps to 1793 to 1828 (LPDPCDSNPCPANSYCSNDWDSYSCSCDPGYYGDNC). Asn1810 is subject to (3R)-3-hydroxyasparagine. Asn1827 carries N-linked (GlcNAc...) asparagine glycosylation. In terms of domain architecture, EGF-like 6; calcium-binding spans 1829–1867 (TNVCDLNPCEHQSVCTRKPSAPHGYTCECPPNYLGPYCE). In terms of domain architecture, EGF-like 7; calcium-binding spans 1883 to 1922 (TCGPCNCDVSKGFDPDCNKTSGECHCKENHYRPPGSPTCL). An N-linked (GlcNAc...) asparagine glycan is attached at Asn1900. A Laminin EGF-like domain is found at 1924–1971 (CDCYPTGSLSRVCDPEDGQCPCKPGVIGRQCDRCDNPFAEVTTNGCEV). N-linked (GlcNAc...) asparagine glycans are attached at residues Asn2024, Asn2043, and Asn2061. The region spanning 2199-2369 (ETTVILPESV…AVLMDVSRRE (171 aa)) is the GAIN-B domain. A disordered region spans residues 2213 to 2238 (PPVVRPAGPGEAQEPEELARRQRRHP). 2 disulfides stabilise this stretch: Cys2319–Cys2351 and Cys2339–Cys2353. The tract at residues 2319-2369 (CVFWNHSILVSGTGGWSARGCEVVFRNESHVSCQCNHMTSFAVLMDVSRRE) is GPS. 2 N-linked (GlcNAc...) asparagine glycosylation sites follow: Asn2323 and Asn2345. Residues 2381-2401 (YVALGVTLAALLLTFFFLTLL) form a helical membrane-spanning segment. Topologically, residues 2402–2416 (RILRSNQHGIRRNLT) are cytoplasmic. A helical membrane pass occupies residues 2417–2437 (AALGLAQLVFLLGINQADLPF). Residue Ala2438 is a topological domain, extracellular. The chain crosses the membrane as a helical span at residues 2439–2459 (CTVIAILLHFLYLCTFSWALL). The Cytoplasmic segment spans residues 2460-2480 (EALHLYRALTEVRDVNTGPMR). A helical transmembrane segment spans residues 2481-2501 (FYYMLGWGVPAFITGLAVGLD). Over 2502–2519 (PEGYGNPDFCWLSIYDTL) the chain is Extracellular. A helical transmembrane segment spans residues 2520-2540 (IWSFAGPVAFAVSMSVFLYIL). The Cytoplasmic portion of the chain corresponds to 2541–2560 (AARASCAAQRQGFEKKGPVS). Residues 2561 to 2581 (GLQPSFAVLLLLSATWLLALL) traverse the membrane as a helical segment. At 2582–2591 (SVNSDTLLFH) the chain is on the extracellular side. The helical transmembrane segment at 2592-2612 (YLFATCNCIQGPFIFLSYVVL) threads the bilayer. The Cytoplasmic segment spans residues 2613-2923 (SKEVRKALKL…SEFLFFNFLH (311 aa)). Disordered stretches follow at residues 2688 to 2838 (SALN…HKGI) and 2854 to 2888 (LRLP…RQSL). Composition is skewed to acidic residues over residues 2718–2730 (TDSD…EDDQ) and 2742–2753 (SEEEEEEEEEEA). A compositionally biased stretch (basic and acidic residues) spans 2807–2819 (PEERLRENGDALS). The span at 2863-2873 (GSSRGSSASEG) shows a compositional bias: low complexity.

Belongs to the G-protein coupled receptor 2 family. LN-TM7 subfamily. In terms of assembly, heterodimer of 2 chains generated by proteolytic processing; the large extracellular N-terminal fragment and the membrane-bound C-terminal fragment predominantly remain associated and non-covalently linked. The iron and 2-oxoglutarate dependent 3-hydroxylation of aspartate and asparagine is (R) stereospecific within EGF domains. In terms of processing, autoproteolytically processed at the GPS region of the GAIN-B domain; this cleavage modulates receptor activity. As to expression, highest expression in brain and testis.

The protein resides in the cell membrane. In terms of biological role, receptor that may have an important role in cell/cell signaling during nervous system formation. The sequence is that of Cadherin EGF LAG seven-pass G-type receptor 2 from Homo sapiens (Human).